A 358-amino-acid polypeptide reads, in one-letter code: Ribosomal RNA large subunit methyltransferase M (358 aa).

S-adenosyl-L-methionine contacts are provided by residues serine 187, 220-223, aspartate 239, aspartate 259, and aspartate 276; that span reads CPGG. Lysine 305 functions as the Proton acceptor in the catalytic mechanism.

This sequence belongs to the class I-like SAM-binding methyltransferase superfamily. RNA methyltransferase RlmE family. RlmM subfamily. Monomer.

It is found in the cytoplasm. The catalysed reaction is cytidine(2498) in 23S rRNA + S-adenosyl-L-methionine = 2'-O-methylcytidine(2498) in 23S rRNA + S-adenosyl-L-homocysteine + H(+). In terms of biological role, catalyzes the 2'-O-methylation at nucleotide C2498 in 23S rRNA. The protein is Ribosomal RNA large subunit methyltransferase M of Shewanella woodyi (strain ATCC 51908 / MS32).